The primary structure comprises 684 residues: Histamine oxidase (684 aa).

Residue 316–327 (YFDSGEYLVGRD) participates in substrate binding. The active-site Proton acceptor is the Asp-318. Residues Cys-337 and Cys-363 are joined by a disulfide bond. 399–404 (VGNYDY) contacts substrate. Catalysis depends on Tyr-402, which acts as the Schiff-base intermediate with substrate; via topaquinone. Position 402 is a 2',4',5'-topaquinone (Tyr-402). 2 residues coordinate Cu cation: His-451 and His-453. Ca(2+) is bound by residues Asp-460, Glu-500, Tyr-590, and Asp-601. Asp-460 is a binding site for Mn(2+). A Mn(2+)-binding site is contributed by Asp-601. Position 612 (His-612) interacts with Cu cation. Residues 647-684 (SSAAGHCGTGSEREHAAPGGTAVGHSGPDTGGQGHCGH) form a disordered region. Residues 675-684 (DTGGQGHCGH) are compositionally biased toward gly residues.

This sequence belongs to the copper/topaquinone oxidase family. As to quaternary structure, homodimer. The cofactor is Cu cation. Zn(2+) is required as a cofactor. It depends on Ca(2+) as a cofactor. Requires L-topaquinone as cofactor. Mn(2+) serves as cofactor. Post-translationally, topaquinone (TPQ) is generated by copper-dependent autoxidation of a specific tyrosyl residue.

Its subcellular location is the cytoplasm. It carries out the reaction a primary methyl amine + O2 + H2O = an aldehyde + H2O2 + NH4(+). The catalysed reaction is histamine + O2 + H2O = imidazole-4-acetaldehyde + H2O2 + NH4(+). Functionally, oxidizes histamine. Other amines including phenethylamine, tyramine, tryptamine, putrescine, and benzylamine also serve as substrate. In Arthrobacter globiformis, this protein is Histamine oxidase.